A 226-amino-acid polypeptide reads, in one-letter code: Movement and silencing protein TGBp1 (226 aa).

The region spanning 1–115 (MDILIISLKS…EFSLEPHFYL (115 aa)) is the (+)RNA virus helicase ATP-binding domain. One can recognise a (+)RNA virus helicase C-terminal domain in the interval 116–226 (ETSFRVPRKV…KGLTYVRAGT (111 aa)).

The protein belongs to the Tymovirales TGBp1 protein family. In terms of assembly, homodimer and homooligomer. Interacts with capsid protein. Interacts with host AGO1; this interaction targets the host protein for degradation, thereby suppressing the antiviral RNA silencing.

It is found in the host cytoplasm. Its function is as follows. Transports viral genome to neighboring plant cells directly through plasmosdesmata, without any budding. The movement protein allows efficient cell to cell propagation, by bypassing the host cell wall barrier. Increases plasmodesma size exclusion limit. Acts as a suppressor of RNA-mediated gene silencing, also known as post-transcriptional gene silencing (PTGS), a mechanism of plant viral defense that limits the accumulation of viral RNAs. This Brassica campestris (Field mustard) protein is Movement and silencing protein TGBp1.